We begin with the raw amino-acid sequence, 657 residues long: Transketolase (657 aa).

His-31 lines the substrate pocket. Thiamine diphosphate-binding positions include His-71 and 120–122; that span reads GPL. Residue Asp-158 coordinates Mg(2+). Residues Gly-159 and Asn-188 each coordinate thiamine diphosphate. Mg(2+) is bound by residues Asn-188 and Ile-190. His-262, Arg-354, and Ser-381 together coordinate substrate. His-262 contributes to the thiamine diphosphate binding site. The active-site Proton donor is Glu-408. Phe-434 provides a ligand contact to thiamine diphosphate. Residues His-458, Asp-466, and Arg-517 each contribute to the substrate site.

This sequence belongs to the transketolase family. In terms of assembly, homodimer. Requires Mg(2+) as cofactor. The cofactor is Ca(2+). Mn(2+) serves as cofactor. Co(2+) is required as a cofactor. It depends on thiamine diphosphate as a cofactor.

The catalysed reaction is D-sedoheptulose 7-phosphate + D-glyceraldehyde 3-phosphate = aldehydo-D-ribose 5-phosphate + D-xylulose 5-phosphate. The protein operates within carbohydrate biosynthesis; Calvin cycle. It functions in the pathway carbohydrate degradation; pentose phosphate pathway. In terms of biological role, catalyzes the transfer of a two-carbon ketol group from a ketose donor to an aldose acceptor, via a covalent intermediate with the cofactor thiamine pyrophosphate. This chain is Transketolase (tklB), found in Cereibacter sphaeroides (Rhodobacter sphaeroides).